Reading from the N-terminus, the 206-residue chain is Small ribosomal subunit protein uS4 (206 aa).

The region spanning 96-161 is the S4 RNA-binding domain; the sequence is RRLDNVVYRM…QGRIQAALAL (66 aa).

Belongs to the universal ribosomal protein uS4 family. Part of the 30S ribosomal subunit. Contacts protein S5. The interaction surface between S4 and S5 is involved in control of translational fidelity.

In terms of biological role, one of the primary rRNA binding proteins, it binds directly to 16S rRNA where it nucleates assembly of the body of the 30S subunit. With S5 and S12 plays an important role in translational accuracy. This is Small ribosomal subunit protein uS4 from Legionella pneumophila (strain Paris).